The chain runs to 520 residues: DNA-(apurinic or apyrimidinic site) endonuclease 2 (520 aa).

Position 59 (glutamate 59) interacts with Mg(2+). The active site involves tyrosine 181. Positions 222, 224, and 353 each coordinate Mg(2+). Aspartate 222 (proton donor/acceptor) is an active-site residue. Cysteine 476, histidine 478, cysteine 500, and cysteine 514 together coordinate Zn(2+). A GRF-type zinc finger spans residues 476-520 (CRHGEESMLKTSKTSANPGRKFWICKRSRGDSNNTESSCGFFQWV).

Belongs to the DNA repair enzymes AP/ExoA family. Requires Mg(2+) as cofactor. The cofactor is Mn(2+).

The protein localises to the nucleus. It carries out the reaction Exonucleolytic cleavage in the 3'- to 5'-direction to yield nucleoside 5'-phosphates.. Functionally, DNA repair enzyme that cleaves apurinic/apyrimidinic (AP) sites and removes 3'-blocking groups present at single strand breaks of damaged DNA. The polypeptide is DNA-(apurinic or apyrimidinic site) endonuclease 2 (APN2) (Saccharomyces cerevisiae (strain ATCC 204508 / S288c) (Baker's yeast)).